The chain runs to 140 residues: Mitochondrial import receptor subunit TOM22 homolog (140 aa).

Residues 1 to 11 are compositionally biased toward low complexity; that stretch reads MAAAAAGPGAP. Residues 1–40 are disordered; that stretch reads MAAAAAGPGAPLSADELLPKGDAEKPEEELEEEDDEELDE. The Cytoplasmic segment spans residues 1 to 81; that stretch reads MAAAAAGPGA…AQKMYRFSRA (81 aa). Ser13 carries the phosphoserine modification. Over residues 25-40 the composition is skewed to acidic residues; it reads KPEEELEEEDDEELDE. The import sequence; necessary for mitochondrion outer membrane localization and integration in the TOM complex stretch occupies residues 39 to 48; sequence DETLSERLWG. Thr41 bears the Phosphothreonine mark. A Phosphoserine modification is found at Ser43. The tract at residues 81–101 is TMD; necessary for mitochondrion outer membrane localization and integration in the TOM complex; that stretch reads AALWIGTTSFMILVLPVVFET. A helical membrane pass occupies residues 82 to 101; that stretch reads ALWIGTTSFMILVLPVVFET. Residues 102–140 lie on the Mitochondrial intermembrane side of the membrane; sequence EKLQMEQQQQLQQRQILLGPNTGLSGGMPGALPSLPGKI. The segment at 121–140 is C-tail signal; necessary for mitochondrion outer membrane localization and integration in the TOM complex; the sequence is PNTGLSGGMPGALPSLPGKI.

Belongs to the Tom22 family. As to quaternary structure, forms part of the preprotein translocase complex of the outer mitochondrial membrane (TOM complex) which consists of at least 7 different proteins (TOMM5, TOMM6, TOMM7, TOMM20, TOMM22, TOMM40 and TOMM70). Interacts with PPP2R2B and TOMM40.

The protein localises to the mitochondrion outer membrane. Central receptor component of the translocase of the outer membrane of mitochondria (TOM complex) responsible for the recognition and translocation of cytosolically synthesized mitochondrial preproteins. Together with the peripheral receptor TOM20 functions as the transit peptide receptor and facilitates the movement of preproteins into the translocation pore. Required for the translocation across the mitochondrial outer membrane of cytochrome P450 monooxygenases. The sequence is that of Mitochondrial import receptor subunit TOM22 homolog (TOMM22) from Bos taurus (Bovine).